Consider the following 446-residue polypeptide: Methylenetetrahydrofolate--tRNA-(uracil-5-)-methyltransferase TrmFO (446 aa).

Residue glycine 8 to glycine 13 participates in FAD binding.

It belongs to the MnmG family. TrmFO subfamily. It depends on FAD as a cofactor.

It is found in the cytoplasm. It catalyses the reaction uridine(54) in tRNA + (6R)-5,10-methylene-5,6,7,8-tetrahydrofolate + NADH + H(+) = 5-methyluridine(54) in tRNA + (6S)-5,6,7,8-tetrahydrofolate + NAD(+). It carries out the reaction uridine(54) in tRNA + (6R)-5,10-methylene-5,6,7,8-tetrahydrofolate + NADPH + H(+) = 5-methyluridine(54) in tRNA + (6S)-5,6,7,8-tetrahydrofolate + NADP(+). Its function is as follows. Catalyzes the folate-dependent formation of 5-methyl-uridine at position 54 (M-5-U54) in all tRNAs. The polypeptide is Methylenetetrahydrofolate--tRNA-(uracil-5-)-methyltransferase TrmFO (Zymomonas mobilis subsp. mobilis (strain ATCC 31821 / ZM4 / CP4)).